We begin with the raw amino-acid sequence, 228 residues long: DNA repair protein RecO (228 aa).

This sequence belongs to the RecO family.

Its function is as follows. Involved in DNA repair and RecF pathway recombination. This is DNA repair protein RecO from Mannheimia succiniciproducens (strain KCTC 0769BP / MBEL55E).